Reading from the N-terminus, the 286-residue chain is Aquaporin NIP4-1 (286 aa).

2 consecutive transmembrane segments (helical) span residues 59–79 (VMVE…AALM) and 86–106 (LTFP…LSWL). Positions 112-114 (NPA) match the NPA 1 motif. 3 helical membrane-spanning segments follow: residues 133 to 153 (LYVA…NAVM), 173 to 193 (LPFL…ATVA), and 201 to 221 (TVGG…IGPV). Residues 227–229 (NPA) carry the NPA 2 motif. A helical transmembrane segment spans residues 241–261 (YDGVWIYVVAPVAGMLVGALC).

The protein belongs to the MIP/aquaporin (TC 1.A.8) family. NIP (TC 1.A.8.12) subfamily. As to expression, expressed in leaves and at lower levels in roots.

It is found in the membrane. Aquaporins facilitate the transport of water and small neutral solutes across cell membranes. This Oryza sativa subsp. japonica (Rice) protein is Aquaporin NIP4-1 (NIP4-1).